The sequence spans 165 residues: uncharacterized protein (165 aa).

Residues 1 to 36 (MTRLCLPRPEAREDPIPVPPRGLGAGEGSGSPVRPP) are disordered. The chain crosses the membrane as a helical span at residues 135 to 155 (LLLLMGLGPLLRACGMPLTLL).

Its subcellular location is the membrane. This is an uncharacterized protein from Homo sapiens (Human).